The sequence spans 367 residues: Dihydroxyacetone phosphate transaminase Cj1437c (367 aa).

Lys-219 carries the N6-(pyridoxal phosphate)lysine modification.

This sequence belongs to the class-II pyridoxal-phosphate-dependent aminotransferase family. The cofactor is pyridoxal 5'-phosphate.

It catalyses the reaction dihydroxyacetone phosphate + L-glutamate = (S)-serinol phosphate + 2-oxoglutarate. It participates in capsule biogenesis; capsule polysaccharide biosynthesis. Its function is as follows. Pyridoxal phosphate (PLP)-dependent transaminase involved in the biosynthesis of amidated D-glucuronic acid structures found on the capsular polysaccharide (CPS) of C.jejuni. Catalyzes the transamination of dihydroxyacetone phosphate (DHAP) to (S)-serinol phosphate in the presence of L-glutamate. Less active with L-aspartate. No activity with dihydroxyacetone or L-alanine. The chain is Dihydroxyacetone phosphate transaminase Cj1437c from Campylobacter jejuni subsp. jejuni serotype O:2 (strain ATCC 700819 / NCTC 11168).